The primary structure comprises 228 residues: ATP-dependent dethiobiotin synthetase BioD (228 aa).

14 to 19 (DAGKTL) contacts ATP. Threonine 18 serves as a coordination point for Mg(2+). Residue lysine 39 is part of the active site. Residues aspartate 56, 117–120 (EGAG), and 206–208 (PRL) each bind ATP. Mg(2+)-binding residues include aspartate 56 and glutamate 117.

It belongs to the dethiobiotin synthetase family. In terms of assembly, homodimer. Requires Mg(2+) as cofactor.

It is found in the cytoplasm. The catalysed reaction is (7R,8S)-7,8-diammoniononanoate + CO2 + ATP = (4R,5S)-dethiobiotin + ADP + phosphate + 3 H(+). The protein operates within cofactor biosynthesis; biotin biosynthesis; biotin from 7,8-diaminononanoate: step 1/2. In terms of biological role, catalyzes a mechanistically unusual reaction, the ATP-dependent insertion of CO2 between the N7 and N8 nitrogen atoms of 7,8-diaminopelargonic acid (DAPA, also called 7,8-diammoniononanoate) to form a ureido ring. This is ATP-dependent dethiobiotin synthetase BioD from Cellvibrio japonicus (strain Ueda107) (Pseudomonas fluorescens subsp. cellulosa).